The primary structure comprises 439 residues: RNA polymerase II-associated protein RBA50 (439 aa).

2 disordered regions span residues 1 to 35 and 49 to 79; these read MDLL…GFPE and LREK…SEAK. A compositionally biased stretch (polar residues) spans 15 to 30; that stretch reads SVESNDNGTLSTNNCG.

It belongs to the RPAP1 family.

It is found in the cytoplasm. In terms of biological role, forms an interface between the RNA polymerase II enzyme and chaperone/scaffolding proteins, suggesting that it is required to connect RNA polymerase II to regulators of protein complex formation. This is RNA polymerase II-associated protein RBA50 (RBA50) from Saccharomyces cerevisiae (strain ATCC 204508 / S288c) (Baker's yeast).